A 406-amino-acid polypeptide reads, in one-letter code: Tryptophan synthase beta chain (406 aa).

N6-(pyridoxal phosphate)lysine is present on Lys-99.

The protein belongs to the TrpB family. In terms of assembly, tetramer of two alpha and two beta chains. The cofactor is pyridoxal 5'-phosphate.

The catalysed reaction is (1S,2R)-1-C-(indol-3-yl)glycerol 3-phosphate + L-serine = D-glyceraldehyde 3-phosphate + L-tryptophan + H2O. It participates in amino-acid biosynthesis; L-tryptophan biosynthesis; L-tryptophan from chorismate: step 5/5. Its function is as follows. The beta subunit is responsible for the synthesis of L-tryptophan from indole and L-serine. This Rhizobium johnstonii (strain DSM 114642 / LMG 32736 / 3841) (Rhizobium leguminosarum bv. viciae) protein is Tryptophan synthase beta chain.